The sequence spans 85 residues: Putative membrane protein insertion efficiency factor (85 aa).

The protein belongs to the UPF0161 family.

The protein resides in the cell inner membrane. Functionally, could be involved in insertion of integral membrane proteins into the membrane. This chain is Putative membrane protein insertion efficiency factor, found in Enterobacter sp. (strain 638).